A 420-amino-acid polypeptide reads, in one-letter code: F420-non-reducing hydrogenase vhu subunit A (420 aa).

Positions 61 and 64 each coordinate Ni(2+).

It belongs to the [NiFe]/[NiFeSe] hydrogenase large subunit family. The F420-non-reducing hydrogenase vhu is composed of four subunits; VhuA, VhuD, VhuG and VhuU. The cofactor is Ni(2+).

The polypeptide is F420-non-reducing hydrogenase vhu subunit A (vhuA) (Methanococcus voltae).